The following is a 121-amino-acid chain: Small ribosomal subunit protein uS13 (121 aa).

The segment at valine 97–lysine 121 is disordered. Residues glutamine 100–lysine 121 show a composition bias toward basic residues.

It belongs to the universal ribosomal protein uS13 family. As to quaternary structure, part of the 30S ribosomal subunit. Forms a loose heterodimer with protein S19. Forms two bridges to the 50S subunit in the 70S ribosome.

Functionally, located at the top of the head of the 30S subunit, it contacts several helices of the 16S rRNA. In the 70S ribosome it contacts the 23S rRNA (bridge B1a) and protein L5 of the 50S subunit (bridge B1b), connecting the 2 subunits; these bridges are implicated in subunit movement. Contacts the tRNAs in the A and P-sites. The protein is Small ribosomal subunit protein uS13 of Parasynechococcus marenigrum (strain WH8102).